The chain runs to 258 residues: D-beta-hydroxybutyrate dehydrogenase (258 aa).

8–32 (LVTGSTSGIGLGIAKALAAQGANII) contributes to the NAD(+) binding site. Serine 140 lines the substrate pocket. Tyrosine 153 serves as the catalytic Proton acceptor.

Belongs to the short-chain dehydrogenases/reductases (SDR) family.

It carries out the reaction (R)-3-hydroxybutanoate + NAD(+) = acetoacetate + NADH + H(+). This chain is D-beta-hydroxybutyrate dehydrogenase (hbdH1), found in Cupriavidus necator (strain ATCC 17699 / DSM 428 / KCTC 22496 / NCIMB 10442 / H16 / Stanier 337) (Ralstonia eutropha).